The following is a 583-amino-acid chain: Thiol:disulfide interchange protein DsbD (583 aa).

The signal sequence occupies residues 1-20 (MLKRFIFLLVGITLTLSAHA). 2 cysteine pairs are disulfide-bonded: cysteine 123–cysteine 128 and cysteine 200–cysteine 322. The next 8 helical transmembrane spans lie at 185-205 (IFWFFLLGIGLAFTPCVLPML), 237-257 (LTYTLLGLVVAAIGLPFQVAL), 261-281 (PVLISLAILFTILAASMFGLF), 302-322 (GGAFGSVFVMGMIAGLVASPC), 344-364 (GLALYLLALGMGIPLILITLF), 375-395 (WLLKVKTAFGFVMLALPVFLL), 405-425 (PLMWSALAMVFVGWLISVIPT), and 433-453 (VRIVLFLTFAVASYPWANLVW). A Thioredoxin domain is found at 440 to 583 (TFAVASYPWA…NQFLNWLNQL (144 aa)). A disulfide bond links cysteine 500 and cysteine 503.

The protein belongs to the thioredoxin family. DsbD subfamily.

It is found in the cell inner membrane. The enzyme catalyses [protein]-dithiol + NAD(+) = [protein]-disulfide + NADH + H(+). It carries out the reaction [protein]-dithiol + NADP(+) = [protein]-disulfide + NADPH + H(+). In terms of biological role, required to facilitate the formation of correct disulfide bonds in some periplasmic proteins and for the assembly of the periplasmic c-type cytochromes. Acts by transferring electrons from cytoplasmic thioredoxin to the periplasm. This transfer involves a cascade of disulfide bond formation and reduction steps. This is Thiol:disulfide interchange protein DsbD from Actinobacillus pleuropneumoniae serotype 5b (strain L20).